A 456-amino-acid chain; its full sequence is Trigger factor (456 aa).

The region spanning 192-277 (GDTVVIDFVG…IHEVKTKEVP (86 aa)) is the PPIase FKBP-type domain.

The protein belongs to the FKBP-type PPIase family. Tig subfamily.

It localises to the cytoplasm. It carries out the reaction [protein]-peptidylproline (omega=180) = [protein]-peptidylproline (omega=0). Involved in protein export. Acts as a chaperone by maintaining the newly synthesized protein in an open conformation. Functions as a peptidyl-prolyl cis-trans isomerase. This chain is Trigger factor, found in Streptococcus pyogenes serotype M12 (strain MGAS9429).